The following is a 229-amino-acid chain: 1-Cys peroxiredoxin PER1 (229 aa).

Positions 4–173 (LTIGDTVPNL…VLRAVDSLLT (170 aa)) constitute a Thioredoxin domain. Cysteine 46 serves as the catalytic Cysteine sulfenic acid (-SOH) intermediate. Positions 205–228 (RKMFPQGFETADLPSKKGYLRFTK) match the Bipartite nuclear localization signal motif.

Belongs to the peroxiredoxin family. Prx6 subfamily.

The protein resides in the nucleus. It is found in the cytoplasm. It carries out the reaction a hydroperoxide + [thioredoxin]-dithiol = an alcohol + [thioredoxin]-disulfide + H2O. Functionally, thiol-specific peroxidase that catalyzes the reduction of hydrogen peroxide and organic hydroperoxides to water and alcohols, respectively. Seems to contribute to the inhibition of germination during stress. The sequence is that of 1-Cys peroxiredoxin PER1 (PER1) from Zea mays (Maize).